Here is a 337-residue protein sequence, read N- to C-terminus: Holliday junction branch migration complex subunit RuvB (337 aa).

The tract at residues 1 to 182 is large ATPase domain (RuvB-L); it reads MEDRMVSASY…FGVLSAMEFY (182 aa). L21, R22, G63, K66, T67, T68, R172, Y182, and R219 together coordinate ATP. Residue T67 coordinates Mg(2+). The tract at residues 183 to 253 is small ATPAse domain (RuvB-S); that stretch reads NEDELKEIIL…IAKNALSLLE (71 aa). The tract at residues 256–337 is head domain (RuvB-H); that stretch reads GEGFDKIDNK…REFKEQTKLT (82 aa). Positions 311 and 316 each coordinate DNA.

This sequence belongs to the RuvB family. In terms of assembly, homohexamer. Forms an RuvA(8)-RuvB(12)-Holliday junction (HJ) complex. HJ DNA is sandwiched between 2 RuvA tetramers; dsDNA enters through RuvA and exits via RuvB. An RuvB hexamer assembles on each DNA strand where it exits the tetramer. Each RuvB hexamer is contacted by two RuvA subunits (via domain III) on 2 adjacent RuvB subunits; this complex drives branch migration. In the full resolvosome a probable DNA-RuvA(4)-RuvB(12)-RuvC(2) complex forms which resolves the HJ.

The protein localises to the cytoplasm. It catalyses the reaction ATP + H2O = ADP + phosphate + H(+). Functionally, the RuvA-RuvB-RuvC complex processes Holliday junction (HJ) DNA during genetic recombination and DNA repair, while the RuvA-RuvB complex plays an important role in the rescue of blocked DNA replication forks via replication fork reversal (RFR). RuvA specifically binds to HJ cruciform DNA, conferring on it an open structure. The RuvB hexamer acts as an ATP-dependent pump, pulling dsDNA into and through the RuvAB complex. RuvB forms 2 homohexamers on either side of HJ DNA bound by 1 or 2 RuvA tetramers; 4 subunits per hexamer contact DNA at a time. Coordinated motions by a converter formed by DNA-disengaged RuvB subunits stimulates ATP hydrolysis and nucleotide exchange. Immobilization of the converter enables RuvB to convert the ATP-contained energy into a lever motion, pulling 2 nucleotides of DNA out of the RuvA tetramer per ATP hydrolyzed, thus driving DNA branch migration. The RuvB motors rotate together with the DNA substrate, which together with the progressing nucleotide cycle form the mechanistic basis for DNA recombination by continuous HJ branch migration. Branch migration allows RuvC to scan DNA until it finds its consensus sequence, where it cleaves and resolves cruciform DNA. In Clostridium novyi (strain NT), this protein is Holliday junction branch migration complex subunit RuvB.